The primary structure comprises 108 residues: Large ribosomal subunit protein uL24 (108 aa).

This sequence belongs to the universal ribosomal protein uL24 family. Part of the 50S ribosomal subunit.

One of two assembly initiator proteins, it binds directly to the 5'-end of the 23S rRNA, where it nucleates assembly of the 50S subunit. Its function is as follows. One of the proteins that surrounds the polypeptide exit tunnel on the outside of the subunit. The chain is Large ribosomal subunit protein uL24 from Mycoplasma capricolum subsp. capricolum (strain California kid / ATCC 27343 / NCTC 10154).